The following is a 571-amino-acid chain: Folylpolyglutamate synthase (571 aa).

An ATP-binding site is contributed by 122–125; sequence GKGS. Positions 146, 215, and 243 each coordinate Mg(2+). Positions 363 and 385 each coordinate ATP.

This sequence belongs to the folylpolyglutamate synthase family. The cofactor is a monovalent cation. As to expression, expressed in both shoots and roots, but expression in roots is higher compared with shoots. Distinct expression in the quiescent center (QC) region of the root tip. Also expressed in vascular tissues of the cotyledons and hypocotyls, and the first true leaves of 7 days old seedlings.

It is found in the plastid. Its subcellular location is the chloroplast. The enzyme catalyses (6S)-5,6,7,8-tetrahydrofolyl-(gamma-L-Glu)(n) + L-glutamate + ATP = (6S)-5,6,7,8-tetrahydrofolyl-(gamma-L-Glu)(n+1) + ADP + phosphate + H(+). Its pathway is cofactor biosynthesis; tetrahydrofolylpolyglutamate biosynthesis. In terms of biological role, catalyzes conversion of folates to polyglutamate derivatives allowing concentration of folate compounds in the cell and the intracellular retention of these cofactors, which are important substrates for most of the folate-dependent enzymes that are involved in one-carbon transfer reactions involved in purine, pyrimidine and amino acid synthesis. Essential for organellar and whole-plant folate homeostasis. Required for postembryonic root development. Generates polyglutamylated folate cofactors to support C1 metabolism required for meristem maintenance and cell expansion during postembryonic root development. The polypeptide is Folylpolyglutamate synthase (Arabidopsis thaliana (Mouse-ear cress)).